Consider the following 226-residue polypeptide: Cytochrome c oxidase subunit 2 (226 aa).

At Met-1–Ser-14 the chain is on the mitochondrial intermembrane side. Residues Pro-15–Met-45 form a helical membrane-spanning segment. The Mitochondrial matrix segment spans residues Leu-46–Gln-59. A helical membrane pass occupies residues Glu-60–Met-87. Topologically, residues Asp-88–Met-226 are mitochondrial intermembrane. 6 residues coordinate Cu cation: His-161, Cys-196, Glu-198, Cys-200, His-204, and Met-207. Residue Glu-198 participates in Mg(2+) binding. A Phosphotyrosine modification is found at Tyr-218.

The protein belongs to the cytochrome c oxidase subunit 2 family. In terms of assembly, component of the cytochrome c oxidase (complex IV, CIV), a multisubunit enzyme composed of 14 subunits. The complex is composed of a catalytic core of 3 subunits MT-CO1, MT-CO2 and MT-CO3, encoded in the mitochondrial DNA, and 11 supernumerary subunits COX4I, COX5A, COX5B, COX6A, COX6B, COX6C, COX7A, COX7B, COX7C, COX8 and NDUFA4, which are encoded in the nuclear genome. The complex exists as a monomer or a dimer and forms supercomplexes (SCs) in the inner mitochondrial membrane with NADH-ubiquinone oxidoreductase (complex I, CI) and ubiquinol-cytochrome c oxidoreductase (cytochrome b-c1 complex, complex III, CIII), resulting in different assemblies (supercomplex SCI(1)III(2)IV(1) and megacomplex MCI(2)III(2)IV(2)). Found in a complex with TMEM177, COA6, COX18, COX20, SCO1 and SCO2. Interacts with TMEM177 in a COX20-dependent manner. Interacts with COX20. Interacts with COX16. Cu cation is required as a cofactor.

It localises to the mitochondrion inner membrane. It carries out the reaction 4 Fe(II)-[cytochrome c] + O2 + 8 H(+)(in) = 4 Fe(III)-[cytochrome c] + 2 H2O + 4 H(+)(out). Component of the cytochrome c oxidase, the last enzyme in the mitochondrial electron transport chain which drives oxidative phosphorylation. The respiratory chain contains 3 multisubunit complexes succinate dehydrogenase (complex II, CII), ubiquinol-cytochrome c oxidoreductase (cytochrome b-c1 complex, complex III, CIII) and cytochrome c oxidase (complex IV, CIV), that cooperate to transfer electrons derived from NADH and succinate to molecular oxygen, creating an electrochemical gradient over the inner membrane that drives transmembrane transport and the ATP synthase. Cytochrome c oxidase is the component of the respiratory chain that catalyzes the reduction of oxygen to water. Electrons originating from reduced cytochrome c in the intermembrane space (IMS) are transferred via the dinuclear copper A center (CU(A)) of subunit 2 and heme A of subunit 1 to the active site in subunit 1, a binuclear center (BNC) formed by heme A3 and copper B (CU(B)). The BNC reduces molecular oxygen to 2 water molecules using 4 electrons from cytochrome c in the IMS and 4 protons from the mitochondrial matrix. The chain is Cytochrome c oxidase subunit 2 (MT-CO2) from Perognathus flavus (Silky pocket mouse).